We begin with the raw amino-acid sequence, 58 residues long: Large ribosomal subunit protein bL32 (58 aa).

The interval 1-24 (MAVPKKKTSKSKRDKRKATWKRKA) is disordered.

The protein belongs to the bacterial ribosomal protein bL32 family.

This is Large ribosomal subunit protein bL32 from Synechococcus sp. (strain ATCC 27144 / PCC 6301 / SAUG 1402/1) (Anacystis nidulans).